A 1032-amino-acid chain; its full sequence is Calmodulin-binding transcription activator 3 (1032 aa).

A DNA-binding region (CG-1) is located at residues 15–141 (VGQILSEARH…YLEVKGSRVS (127 aa)). Positions 146 to 197 (RMQRTEDAARSPQETGDALTSEHDGYASCSFNQNDHSNHSQTTDSASVNGFH) are disordered. A compositionally biased stretch (polar residues) spans 174 to 195 (CSFNQNDHSNHSQTTDSASVNG). At serine 272 the chain carries Phosphoserine. ANK repeat units lie at residues 661-690 (GGQGVLHFAASLGYNWALEPTIIAGVSVDF), 694-723 (NGWTALHWAAFFGRERIIGSLIALGAAPGT), and 733-762 (SGSTPSDLAYANGHKGIAGYLSEYALRAHV). 2 IQ domains span residues 852 to 881 (VQAAAIRIQNKFRGYKGRKDYLITRQRIIK) and 875 to 904 (TRQRIIKIQAHVRGYQFRKNYRKIIWSVGV). A calmodulin-binding region spans residues 900-922 (WSVGVLEKVILRWRRKGAGLRGF). A coiled-coil region spans residues 945 to 987 (KQGRKQTEDRLQKALARVKSMVQYPEARDQYRRLLNVVNDIQE). Serine 964 bears the Phosphoserine mark.

This sequence belongs to the CAMTA family. As to quaternary structure, interacts with SR1IP1. Interacts with DSC1. Post-translationally, ubiquinated during pathogen infection. Ubiquitination leads to its subsequent proteasome-dependent degradation, thus allowing the establishment of plant defense response. In terms of tissue distribution, expressed in roots, stems, leaves, carpels, and siliques, but not in stigmas or other parts of the flower.

The protein localises to the nucleus. Its function is as follows. Transcription activator that binds to the DNA consensus sequence 5'-[ACG]CGCG[GTC]-3'. Binds calmodulin in a calcium-dependent manner in vitro. Regulates transcriptional activity in response to calcium signals. Involved in freezing tolerance in association with CAMTA1 and CAMTA2. Required for the cold-induced expression of DREB1B/CBF1, DREB1C/CBF2, ZAT12 and GOLS3. Involved in response to cold. Contributes together with CAMTA5 to the positive regulation of the cold-induced expression of DREB1A/CBF3, DREB1B/CBF1 and DREB1C/CBF2. Involved together with CAMTA2 and CAMTA4 in the positive regulation of a general stress response (GSR). Involved in the regulation of GSR amplitude downstream of MEKK1. Involved in the regulation of a set of genes involved in defense responses against pathogens. Involved in the regulation of both basal resistance and systemic acquired resistance (SAR). Acts as negative regulator of plant immunity. Binds to the promoter of the defense-related gene EDS1 and represses its expression. Binds to the promoter of the defense-related gene NDR1 and represses its expression. Involved in defense against insects. Required for tolerance to the generalist herbivore Trichoplusia ni, and contributes to the positive regulation of genes associated with glucosinolate metabolism. Required for tolerance to Bradysia impatiens larvae. Mediates herbivore-induced wound response. Required for wound-induced jasmonate accumulation. Involved in the regulation of ethylene-induced senescence by binding to the promoter of the senescence-inducer gene EIN3 and repressing its expression. The protein is Calmodulin-binding transcription activator 3 of Arabidopsis thaliana (Mouse-ear cress).